The primary structure comprises 369 residues: Phosphoribosyl pyrophosphate synthase-associated protein 2 (369 aa).

Residue M1 is modified to N-acetylmethionine. A phosphoserine mark is found at S219, S227, and S233.

It belongs to the ribose-phosphate pyrophosphokinase family. In terms of assembly, binds to PRPS1 and PRPS2.

Seems to play a negative regulatory role in 5-phosphoribose 1-diphosphate synthesis. This is Phosphoribosyl pyrophosphate synthase-associated protein 2 (PRPSAP2) from Bos taurus (Bovine).